Reading from the N-terminus, the 567-residue chain is Amino-acid acetyltransferase, mitochondrial (567 aa).

An N-acetyltransferase domain is found at Lys-392–Ile-558.

This sequence belongs to the acetyltransferase family.

The protein localises to the mitochondrion. The catalysed reaction is L-glutamate + acetyl-CoA = N-acetyl-L-glutamate + CoA + H(+). Its pathway is amino-acid biosynthesis; L-arginine biosynthesis; N(2)-acetyl-L-ornithine from L-glutamate: step 1/4. Functionally, N-acetylglutamate synthase involved in arginine biosynthesis. The sequence is that of Amino-acid acetyltransferase, mitochondrial (ARG2) from Vanderwaltozyma polyspora (strain ATCC 22028 / DSM 70294 / BCRC 21397 / CBS 2163 / NBRC 10782 / NRRL Y-8283 / UCD 57-17) (Kluyveromyces polysporus).